A 666-amino-acid polypeptide reads, in one-letter code: DNA mismatch repair protein MutL (666 aa).

It belongs to the DNA mismatch repair MutL/HexB family.

In terms of biological role, this protein is involved in the repair of mismatches in DNA. It is required for dam-dependent methyl-directed DNA mismatch repair. May act as a 'molecular matchmaker', a protein that promotes the formation of a stable complex between two or more DNA-binding proteins in an ATP-dependent manner without itself being part of a final effector complex. The chain is DNA mismatch repair protein MutL from Clostridium botulinum (strain ATCC 19397 / Type A).